We begin with the raw amino-acid sequence, 168 residues long: MSRSRINGNFIDKTFSIVANILLRIIPTTSGEKEAFAYYRDGMSAQSEGNYAEALQNYYEAMRLEIDPYDRSYILYNIGLIHTRNGEHTKALEYYFRALERNPFLPQAFNNMAVICHYRGEQAIRQGDSEIAEAWFDQAAEYWKQALALTPGNYIEAQNWLKITGRFE.

3 TPR repeats span residues 35–68 (AFAYYRDGMSAQSEGNYAEALQNYYEAMRLEIDP), 72–105 (SYILYNIGLIHTRNGEHTKALEYYFRALERNPFL), and 120–153 (GEQAIRQGDSEIAEAWFDQAAEYWKQALALTPGN).

This sequence belongs to the Ycf3 family.

The protein localises to the plastid. The protein resides in the chloroplast thylakoid membrane. Functionally, essential for the assembly of the photosystem I (PSI) complex. May act as a chaperone-like factor to guide the assembly of the PSI subunits. This is Photosystem I assembly protein Ycf3 from Morus indica (Mulberry).